Here is a 97-residue protein sequence, read N- to C-terminus: Co-chaperonin GroES (97 aa).

This sequence belongs to the GroES chaperonin family. In terms of assembly, heptamer of 7 subunits arranged in a ring. Interacts with the chaperonin GroEL.

The protein resides in the cytoplasm. Together with the chaperonin GroEL, plays an essential role in assisting protein folding. The GroEL-GroES system forms a nano-cage that allows encapsulation of the non-native substrate proteins and provides a physical environment optimized to promote and accelerate protein folding. GroES binds to the apical surface of the GroEL ring, thereby capping the opening of the GroEL channel. The chain is Co-chaperonin GroES from Blochmanniella pennsylvanica (strain BPEN).